A 587-amino-acid polypeptide reads, in one-letter code: Large T antigen (587 aa).

The 77-residue stretch at 6–82 folds into the J domain; sequence RLTELLCLPV…PEESGYATFE (77 aa). Positions 58–78 are disordered; sequence EGLRADETLEDSDPEPEESGY. A compositionally biased stretch (acidic residues) spans 65-75; that stretch reads TLEDSDPEPEE. The T-ag OBD DNA-binding region spans 102–219; it reads CMQTYFSVNE…EECSIDMNVV (118 aa). The T-ag D1-type zinc-finger motif lies at 221–319; it reads EKQFMHAMLY…KRFRSATMTR (99 aa). Residues Cys-258, Cys-261, His-275, and His-279 each coordinate Zn(2+). One can recognise an SF3 helicase domain in the interval 360–520; that stretch reads PDVDVIVDIL…KVYAKALRNN (161 aa). 386 to 393 contacts ATP; sequence GPVNTGKT.

Forms homohexamers in the presence of ATP. Interacts with host HDAC1. Interacts (via LXCXE domain) with host RB1; the interaction induces the aberrant dissociation of RB1-E2F1 complex thereby disrupting RB1's activity. Interacts (via LXCXE domain) with host pRB-related proteins RBL1 and RBL2. Interacts (via C-terminus) with host TOP1 and POLA1 allowing DNA replication. Interacts with host TP53, inhibiting TP53 binding to DNA. Interacts with host preinitiation complex components TBP, TFIIA and TFIID to regulate transcription initiation. Requires Mg(2+) as cofactor. Post-translationally, phosphorylated on both serine and threonine residues. Small t antigen inhibits the dephosphorylation by the AC form of PP2A. O-Glycosylated near the C-terminal region. In terms of processing, acetylated by CBP in a TP53-dependent manner.

It is found in the host nucleus. The catalysed reaction is Couples ATP hydrolysis with the unwinding of duplex DNA by translocating in the 3'-5' direction.. It carries out the reaction ATP + H2O = ADP + phosphate + H(+). Functionally, isoform large T antigen is a key early protein essential for both driving viral replication and inducing cellular transformation. Plays a role in viral genome replication by driving entry of quiescent cells into the cell cycle and by autoregulating the synthesis of viral early mRNA. Displays highly oncogenic activities by corrupting the host cellular checkpoint mechanisms that guard cell division and the transcription, replication, and repair of DNA. Participates in the modulation of cellular gene expression preceeding viral DNA replication. This step involves binding to host key cell cycle regulators retinoblastoma protein RB1/pRb and TP53. Induces the disassembly of host E2F1 transcription factors from RB1, thus promoting transcriptional activation of E2F1-regulated S-phase genes. Inhibits host TP53 binding to DNA, abrogating the ability of TP53 to stimulate gene expression. Plays the role of a TFIID-associated factor (TAF) in transcription initiation for all three RNA polymerases, by stabilizing the TBP-TFIIA complex on promoters. Initiates viral DNA replication and unwinding via interactions with the viral origin of replication. Binds two adjacent sites in the SV40 origin. The replication fork movement is facilitated by Large T antigen helicase activity. Has processive 3'-5' DNA helicase activity which requires a short 3' single-stranded region and ATP. Activates the transcription of viral late mRNA, through host TBP and TFIIA stabilization. Interferes with histone deacetylation mediated by HDAC1, leading to activation of transcription. In Budgerigar fledgling disease virus (BFPyV), this protein is Large T antigen.